The chain runs to 338 residues: Glyceraldehyde-3-phosphate dehydrogenase, cytosolic (338 aa).

The segment at 2–153 (ADKKIKIGIN…YKSDLNIVSN (152 aa)) is binding to NAD. Residues 15-16 (RI) and aspartate 37 contribute to the NAD(+) site. The tract at residues 56–75 (GQWKHNELKVKDEKTLLFGE) is external loop. Residue arginine 84 participates in NAD(+) binding. The tract at residues 154–338 (ASCTTNCLAP…VDLIIHMSKA (185 aa)) is catalytic. Position 155–157 (155–157 (SCT)) interacts with D-glyceraldehyde 3-phosphate. Catalysis depends on cysteine 156, which acts as the Nucleophile. 2 positions are modified to S-nitrosocysteine: cysteine 156 and cysteine 160. The S-loop stretch occupies residues 183–206 (HSITATQKTVDGPSMKDWRGGRAA). Residues threonine 186, 215–216 (TG), and arginine 238 each bind D-glyceraldehyde 3-phosphate. Asparagine 320 contacts NAD(+).

The protein belongs to the glyceraldehyde-3-phosphate dehydrogenase family. As to quaternary structure, homotetramer.

The protein localises to the cytoplasm. The enzyme catalyses D-glyceraldehyde 3-phosphate + phosphate + NAD(+) = (2R)-3-phospho-glyceroyl phosphate + NADH + H(+). The protein operates within carbohydrate degradation; glycolysis; pyruvate from D-glyceraldehyde 3-phosphate: step 1/5. Key enzyme in glycolysis that catalyzes the first step of the pathway by converting D-glyceraldehyde 3-phosphate (G3P) into 3-phospho-D-glyceroyl phosphate. Essential for the maintenance of cellular ATP levels and carbohydrate metabolism. The polypeptide is Glyceraldehyde-3-phosphate dehydrogenase, cytosolic (GAPC) (Sinapis alba (White mustard)).